The sequence spans 212 residues: 3-demethoxyubiquinol 3-hydroxylase (212 aa).

E61, E91, H94, E143, E175, and H178 together coordinate Fe cation.

Belongs to the COQ7 family. It depends on Fe cation as a cofactor.

It localises to the cell membrane. It catalyses the reaction a 5-methoxy-2-methyl-3-(all-trans-polyprenyl)benzene-1,4-diol + AH2 + O2 = a 3-demethylubiquinol + A + H2O. The protein operates within cofactor biosynthesis; ubiquinone biosynthesis. Functionally, catalyzes the hydroxylation of 2-nonaprenyl-3-methyl-6-methoxy-1,4-benzoquinol during ubiquinone biosynthesis. This is 3-demethoxyubiquinol 3-hydroxylase from Methylibium petroleiphilum (strain ATCC BAA-1232 / LMG 22953 / PM1).